The sequence spans 1912 residues: Methylcytosine dioxygenase TET2 (1912 aa).

Basic and acidic residues predominate over residues 1–11; that stretch reads MEQDRTTHAEG. The interval 1-86 is disordered; that stretch reads MEQDRTTHAE…PHEDRGYSRC (86 aa). Ser15 and Ser23 each carry phosphoserine. Over residues 53–74 the composition is skewed to polar residues; sequence TKWQSSQSCYGISHMKGSQSSH. Residues Ser76 and Ser97 each carry the phosphoserine modification. Disordered regions lie at residues 112–166, 340–359, 367–388, 429–470, 673–723, 832–862, 907–966, and 1009–1052; these read LDQK…FPTR, DRNL…QKET, SSKF…QSLL, IDHQ…PEKS, PQTQ…DKQR, EQAQ…AEAA, QEQQ…NGQP, and ESEN…EGCN. 5 stretches are compositionally biased toward polar residues: residues 135 to 158, 340 to 353, 367 to 387, 434 to 447, and 673 to 689; these read SRQP…QESS, DRNL…SEQY, SSKF…SQSL, KTSS…SVHT, and PQTQ…SNFP. Low complexity predominate over residues 690–701; that stretch reads QICQQQQQQQLQ. Composition is skewed to polar residues over residues 707–719 and 832–844; these read QMPQ…QGSN and EQAQ…SSLQ. Positions 907–921 are enriched in low complexity; it reads QEQQQTQQSQPGHNQ. Composition is skewed to polar residues over residues 944-966 and 1036-1046; these read PQEN…NGQP and SDTPGEQSQNG. Phosphoserine is present on Ser1036. Cys1048, Cys1106, His1132, and Cys1134 together coordinate Zn(2+). Arg1174 lines the 2-oxoglutarate pocket. The Zn(2+) site is built by Cys1184, Cys1186, Cys1202, and Cys1211. The interval 1203–1216 is interaction with DNA; sequence SWSMYYNGCKFARS. Lys1212 is covalently cross-linked (Glycyl lysine isopeptide (Lys-Gly) (interchain with G-Cter in ubiquitin)). Cys1271 provides a ligand contact to Zn(2+). Cys1287 is a 2-oxoglutarate binding site. His1293 lines the Zn(2+) pocket. The Fe cation site is built by His1295 and Asp1297. Residue Asn1300 participates in substrate binding. His1329 contacts 2-oxoglutarate. 2 disordered regions span residues 1379–1414 and 1444–1514; these read KKKA…SSSH and LQRH…HTSD. The span at 1387-1396 shows a compositional bias: basic residues; it reads AKTKKAARKR. Pro residues predominate over residues 1456–1473; it reads QPQPPQPQPQTTPQPQPQ. Positions 1480–1512 are enriched in polar residues; it reads GNSQSVGSHCSGSTSVYTRQPTPHSPYPSSAHT. His1795 contacts Fe cation. 1810 to 1812 serves as a coordination point for 2-oxoglutarate; sequence RIS. 1816-1818 provides a ligand contact to substrate; it reads YRH. His1826 is a Zn(2+) binding site. Basic and acidic residues predominate over residues 1842–1866; sequence EEECGKNGSDHVSQKNHGKQEKREP. The tract at residues 1842–1871 is disordered; that stretch reads EEECGKNGSDHVSQKNHGKQEKREPTGPQE.

Belongs to the TET family. Interacts with HCFC1. Interacts with OGT. Interacts with PROSER1; this interaction mediates TET2 O-GlcNAcylation and stability by promoting the interaction between OGT and TET2. Directly interacts (via C-terminus) with the DCAF1 component of the CRL4(VprBP) E3 ubiquitin-protein ligase complex. Requires Fe(2+) as cofactor. Zn(2+) serves as cofactor. In terms of processing, may be glycosylated. It is unclear whether interaction with OGT leads to GlcNAcylation. According to a report, it is GlcNAcylated by OGT. In contrast, another group reports no GlcNAcylation by OGT in human ortholog. Post-translationally, monoubiquitinated at Lys-1212 by the DCX (DDB1-CUL4-X-box) E3 ubiquitin-protein ligase complex called CRL4(VprBP) or CUL4A-RBX1-DDB1-DCAF1/VPRBP complex; this modification promotes binding to DNA. Acetylated. As to expression, expressed in the brain, kidney, heart, lung, muscle and stomach. Expressed in germinal vesicle (GV) stage and MII-stage oocytes and in early embryos. Present in embryonic stem cells (ES cells).

Its subcellular location is the nucleus. The protein localises to the chromosome. The enzyme catalyses a 5-methyl-2'-deoxycytidine in DNA + 2-oxoglutarate + O2 = a 5-hydroxymethyl-2'-deoxycytidine in DNA + succinate + CO2. It carries out the reaction a 5-hydroxymethyl-2'-deoxycytidine in DNA + 2-oxoglutarate + O2 = a 5-formyl-2'-deoxycytidine in DNA + succinate + CO2 + H2O. The catalysed reaction is a 5-formyl-2'-deoxycytidine in DNA + 2-oxoglutarate + O2 = a 5-carboxyl-2'-deoxycytidine in DNA + succinate + CO2 + H(+). Its function is as follows. Dioxygenase that catalyzes the conversion of the modified genomic base 5-methylcytosine (5mC) into 5-hydroxymethylcytosine (5hmC) and plays a key role in active DNA demethylation. Has a preference for 5-hydroxymethylcytosine in CpG motifs. Also mediates subsequent conversion of 5hmC into 5-formylcytosine (5fC), and conversion of 5fC to 5-carboxylcytosine (5caC). Conversion of 5mC into 5hmC, 5fC and 5caC probably constitutes the first step in cytosine demethylation. Methylation at the C5 position of cytosine bases is an epigenetic modification of the mammalian genome which plays an important role in transcriptional regulation. In addition to its role in DNA demethylation, also involved in the recruitment of the O-GlcNAc transferase OGT to CpG-rich transcription start sites of active genes, thereby promoting histone H2B GlcNAcylation by OGT. The sequence is that of Methylcytosine dioxygenase TET2 (Tet2) from Mus musculus (Mouse).